Here is a 406-residue protein sequence, read N- to C-terminus: MSKLFVGSEIGQLRRVILHRPERALSHLTPTNCHNLLFDDVLSVEKALHEHDQFVATLRQQDVEVLLLQDLLEETLAHPEAKQWLLRHQISHYRFGPTFANQIRAFLLEKNNKELASILLGGLAFIELPFKAPSMLQQLSDPFDFVIDPLPNHLFTRDTSCWIYGGVSINPMAKAARKRESNHLRAIYKWHPLFSNQSFPRYFGDENRHYDNATIEGGDVLIIGKGNVLVGISERTTPQGIENLAKQLFRTEQAKQVIAIKLPENRSCMHLDTVMTHMDHNVFSVYPRVIDKNMPCWSITPCGDQQLAIQEKPNFEHSLMQALELDSLNIITTGGDSYEAEREQWHDANNVLTIKPGVVVAYERNVYTNEKYDKAGITVLPIMGDELGRGRGGARCMSCPIERDGI.

Residue Cys396 is the Amidino-cysteine intermediate of the active site.

The protein belongs to the arginine deiminase family.

It localises to the cytoplasm. The enzyme catalyses L-arginine + H2O = L-citrulline + NH4(+). It functions in the pathway amino-acid degradation; L-arginine degradation via ADI pathway; carbamoyl phosphate from L-arginine: step 1/2. The polypeptide is Arginine deiminase (Aliivibrio salmonicida (strain LFI1238) (Vibrio salmonicida (strain LFI1238))).